The sequence spans 129 residues: Virion-associated protein (129 aa).

Coiled-coil stretches lie at residues 1–31 and 38–59; these read MANL…ILEM and IKES…LIND. The interval 122–129 is capsid binding; the sequence is PAGWPNQF.

Belongs to the caulimovirus ORF III family. Homotetramer, through coiled-coil domain. Homotrimer when interacts with icosehadral capsid. Interacts with capsid protein, and with Movement protein.

The protein resides in the virion. It is found in the host cell junction. It localises to the host plasmodesma. Plays a role in virus cell-to-cell and plant-to-plant transmission. Interacts with virion icosahedral capsid and movement protein, thereby facilitating virion cell-to-cell transmission through plasmodesmata opened by viral movement protein. Also interacts with aphid transmission factor, attaching the virion to aphid stylet when the animal feeds on an virus infected plant. Aphid saliva may later detach the virion, inducing release of infectious particles when the animal feeds on a new plant. In Arabidopsis thaliana (Mouse-ear cress), this protein is Virion-associated protein.